The primary structure comprises 141 residues: Nucleoside diphosphate kinase (141 aa).

K11, F59, R87, T93, R104, and N114 together coordinate ATP. H117 serves as the catalytic Pros-phosphohistidine intermediate.

The protein belongs to the NDK family. As to quaternary structure, homotetramer. Mg(2+) is required as a cofactor.

It is found in the cytoplasm. The enzyme catalyses a 2'-deoxyribonucleoside 5'-diphosphate + ATP = a 2'-deoxyribonucleoside 5'-triphosphate + ADP. It catalyses the reaction a ribonucleoside 5'-diphosphate + ATP = a ribonucleoside 5'-triphosphate + ADP. Its function is as follows. Major role in the synthesis of nucleoside triphosphates other than ATP. The ATP gamma phosphate is transferred to the NDP beta phosphate via a ping-pong mechanism, using a phosphorylated active-site intermediate. The polypeptide is Nucleoside diphosphate kinase (Proteus mirabilis (strain HI4320)).